We begin with the raw amino-acid sequence, 273 residues long: Putative pyruvate, phosphate dikinase regulatory protein (273 aa).

Gly-153–Thr-160 provides a ligand contact to ADP.

It belongs to the pyruvate, phosphate/water dikinase regulatory protein family. PDRP subfamily.

It carries out the reaction N(tele)-phospho-L-histidyl/L-threonyl-[pyruvate, phosphate dikinase] + ADP = N(tele)-phospho-L-histidyl/O-phospho-L-threonyl-[pyruvate, phosphate dikinase] + AMP + H(+). The catalysed reaction is N(tele)-phospho-L-histidyl/O-phospho-L-threonyl-[pyruvate, phosphate dikinase] + phosphate + H(+) = N(tele)-phospho-L-histidyl/L-threonyl-[pyruvate, phosphate dikinase] + diphosphate. In terms of biological role, bifunctional serine/threonine kinase and phosphorylase involved in the regulation of the pyruvate, phosphate dikinase (PPDK) by catalyzing its phosphorylation/dephosphorylation. This Rhizobium etli (strain ATCC 51251 / DSM 11541 / JCM 21823 / NBRC 15573 / CFN 42) protein is Putative pyruvate, phosphate dikinase regulatory protein.